A 175-amino-acid chain; its full sequence is Apoptosis regulator Bcl-2 homolog (175 aa).

The segment at 37–42 (KLYITG) is mediates interaction with human NOP53 and localization to host nucleolus. Residues 153 to 173 (MTALLGSIALLATILAAVAMS) traverse the membrane as a helical segment.

This sequence belongs to the Bcl-2 family. Interacts with human NOP53; may sequester ORF16 in host nucleolus and reduce its antiapoptotic activity. Interacts with ORF55.

The protein resides in the host membrane. Its subcellular location is the host mitochondrion. The protein localises to the host nucleus. It is found in the host nucleolus. Functionally, plays a role in the protection against apoptosis mediated by cytotoxic cells during the immune response to acute and persistent viral infection. Contributes therefore to latency establishment. Also plays a role in the inhibition of host starvation-induced autophagy which ultimately contributes to the viral chronic infection. Also participates in the viral genome replication within host nucleus. This Homo sapiens (Human) protein is Apoptosis regulator Bcl-2 homolog (vBCL2).